A 669-amino-acid chain; its full sequence is tRNA 5-methylaminomethyl-2-thiouridine biosynthesis bifunctional protein MnmC (669 aa).

Residues 1-246 (MIKNANIHFN…KRSMLIGTLK (246 aa)) form a tRNA (mnm(5)s(2)U34)-methyltransferase region. The segment at 271–669 (IGGGIASSCI…IVRDLIRNKI (399 aa)) is FAD-dependent cmnm(5)s(2)U34 oxidoreductase.

It in the N-terminal section; belongs to the methyltransferase superfamily. tRNA (mnm(5)s(2)U34)-methyltransferase family. The protein in the C-terminal section; belongs to the DAO family. Requires FAD as cofactor.

It is found in the cytoplasm. The catalysed reaction is 5-aminomethyl-2-thiouridine(34) in tRNA + S-adenosyl-L-methionine = 5-methylaminomethyl-2-thiouridine(34) in tRNA + S-adenosyl-L-homocysteine + H(+). In terms of biological role, catalyzes the last two steps in the biosynthesis of 5-methylaminomethyl-2-thiouridine (mnm(5)s(2)U) at the wobble position (U34) in tRNA. Catalyzes the FAD-dependent demodification of cmnm(5)s(2)U34 to nm(5)s(2)U34, followed by the transfer of a methyl group from S-adenosyl-L-methionine to nm(5)s(2)U34, to form mnm(5)s(2)U34. This Pseudoalteromonas translucida (strain TAC 125) protein is tRNA 5-methylaminomethyl-2-thiouridine biosynthesis bifunctional protein MnmC.